The following is a 596-amino-acid chain: Probable lysosomal cobalamin transporter (596 aa).

Transmembrane regions (helical) follow at residues 13 to 33, 45 to 65, 99 to 119, 150 to 170, 201 to 221, 318 to 338, 353 to 373, 381 to 401, 425 to 445, and 512 to 532; these read IWVA…ITTF, VSIV…LLPV, VVYY…IPFA, LGFV…PAAG, LLIT…LALL, LLGG…MLIT, GYIL…VQSA, ILMA…IATI, IATV…AMIV, and VFGA…MVVF. N-linked (GlcNAc...) asparagine glycosylation is present at Asn543. Positions 576–596 are disordered; sequence GRAKNRNGYGTGGGEGSNGRG. Over residues 584 to 596 the composition is skewed to gly residues; sequence YGTGGGEGSNGRG.

The protein belongs to the LIMR family. LMBRD1 subfamily.

It localises to the lysosome membrane. Its function is as follows. Probable lysosomal cobalamin transporter. Required to export cobalamin from lysosomes allowing its conversion to cofactors. This is Probable lysosomal cobalamin transporter from Podospora anserina (strain S / ATCC MYA-4624 / DSM 980 / FGSC 10383) (Pleurage anserina).